A 450-amino-acid chain; its full sequence is Chitobiosyldiphosphodolichol beta-mannosyltransferase (450 aa).

Residues 1–13 (MSWIQIPWSWVVT) are Lumenal-facing. Residues 14–34 (LIVTYLSLPLIIYYLVPYIFY) form a helical membrane-spanning segment. The Cytoplasmic segment spans residues 35–106 (GNKSSKKRII…PTLTLQGNKR (72 aa)). The segment at residues 107–127 (SIIFLVKKVLFQVSAIIAQLW) is an intramembrane region (helical). The Cytoplasmic portion of the chain corresponds to 128 to 450 (ELRGSNYMLI…SAMQELKLVA (323 aa)).

It belongs to the glycosyltransferase group 1 family.

The protein localises to the endoplasmic reticulum membrane. It carries out the reaction an N,N'-diacetylchitobiosyl-diphospho-di-trans,poly-cis-dolichol + GDP-alpha-D-mannose = a beta-D-Man-(1-&gt;4)-beta-D-GlcNAc-(1-&gt;4)-alpha-D-GlcNAc-diphospho-di-trans,poly-cis-dolichol + GDP + H(+). It participates in protein modification; protein glycosylation. Its function is as follows. Participates in the formation of the lipid-linked precursor oligosaccharide for N-glycosylation. Involved in assembling the dolichol-pyrophosphate-GlcNAc(2)-Man(5) intermediate on the cytoplasmic surface of the ER. This chain is Chitobiosyldiphosphodolichol beta-mannosyltransferase (ALG1), found in Candida glabrata (strain ATCC 2001 / BCRC 20586 / JCM 3761 / NBRC 0622 / NRRL Y-65 / CBS 138) (Yeast).